The following is a 337-amino-acid chain: Large ribosomal subunit protein uL3 (337 aa).

The segment at 1 to 26 (MTRHHQPRKGSVAFSPRKRVARETPR) is disordered.

This sequence belongs to the universal ribosomal protein uL3 family. As to quaternary structure, part of the 50S ribosomal subunit. Forms a cluster with proteins L14 and L24e.

One of the primary rRNA binding proteins, it binds directly near the 3'-end of the 23S rRNA, where it nucleates assembly of the 50S subunit. This Methanosphaera stadtmanae (strain ATCC 43021 / DSM 3091 / JCM 11832 / MCB-3) protein is Large ribosomal subunit protein uL3.